We begin with the raw amino-acid sequence, 401 residues long: Subtilisin-like protease 7 (401 aa).

The signal sequence occupies residues 1-20 (MGFITKAIPLALAAASVING). Positions 21–119 (AEILETRAGV…IERDARVQIN (99 aa)) are excised as a propeptide. Positions 36-118 (KYIVVMNDGM…YIERDARVQI (83 aa)) constitute an Inhibitor I9 domain. Asn58 is a glycosylation site (N-linked (GlcNAc...) asparagine). A Peptidase S8 domain is found at 129-401 (SWGLARVGSR…SKLINNGSGM (273 aa)). Active-site charge relay system residues include Asp161 and His193. N-linked (GlcNAc...) asparagine glycosylation is found at Asn223 and Asn253. The Charge relay system role is filled by Ser347. Residue Asn397 is glycosylated (N-linked (GlcNAc...) asparagine).

This sequence belongs to the peptidase S8 family.

The protein localises to the secreted. Secreted subtilisin-like serine protease with keratinolytic activity that contributes to pathogenicity. The polypeptide is Subtilisin-like protease 7 (SUB7) (Trichophyton tonsurans (Scalp ringworm fungus)).